The primary structure comprises 158 residues: MLTHLDSRGHAHMVDVTDKASTAREAEAEAWVRMRPETLELIQKGGHPKGDVFAVARIAGIMAAKKTHELIPLCHPLLLTGIKVELSAEGEDRVRIVARCKLAGQTGVEMEALTAASVAALTLYDMCKAVDRGLLIEQVRLLEKKGGKSGHYQAGQAM.

Substrate contacts are provided by residues leucine 73 to histidine 75 and methionine 110 to glutamate 111. Residue aspartate 125 is part of the active site.

It belongs to the MoaC family. Homohexamer; trimer of dimers.

It carries out the reaction (8S)-3',8-cyclo-7,8-dihydroguanosine 5'-triphosphate = cyclic pyranopterin phosphate + diphosphate. It participates in cofactor biosynthesis; molybdopterin biosynthesis. Catalyzes the conversion of (8S)-3',8-cyclo-7,8-dihydroguanosine 5'-triphosphate to cyclic pyranopterin monophosphate (cPMP). This is Cyclic pyranopterin monophosphate synthase from Azotobacter vinelandii (strain DJ / ATCC BAA-1303).